Consider the following 80-residue polypeptide: DNA-binding protein HU-like (80 aa).

This sequence belongs to the bacterial histone-like protein family.

Its function is as follows. Histone-like DNA-binding protein which is capable of wrapping DNA to stabilize it, and thus to prevent its denaturation under extreme environmental conditions. The polypeptide is DNA-binding protein HU-like (Rickettsia conorii (strain ATCC VR-613 / Malish 7)).